A 113-amino-acid polypeptide reads, in one-letter code: Sensorin-A (113 aa).

The N-terminal stretch at 1 to 32 is a signal peptide; the sequence is MPSRAATSPLNVQMMVVLCIVCLALQAVAANA. Residue phenylalanine 54 is modified to Phenylalanine amide. Residues 58-113 constitute a propeptide that is removed on maturation; the sequence is SSSETYSTNLINLLSRQLVSQEELRAILEKQPILLDEVVKILDRNDDGYITVADLL. Positions 87–113 constitute an EF-hand domain; that stretch reads KQPILLDEVVKILDRNDDGYITVADLL. The Ca(2+) site is built by aspartate 100, asparagine 102, aspartate 104, tyrosine 106, and aspartate 111.

Seems to be specific to the mechanosensory neurons of the central nervous system.

Its subcellular location is the secreted. Its function is as follows. May function as an inhibitory cotransmitter acting in conjunction with the fast excitatory transmitter released by sensory neurons. The peptide selectively inhibits certain postsynaptic cells probably by means of sensorin A release. This is Sensorin-A (PSC1) from Aplysia californica (California sea hare).